The primary structure comprises 64 residues: Large ribosomal subunit protein bL35 (64 aa).

Residues T17–T41 are disordered. Residues E25–H35 are compositionally biased toward basic and acidic residues.

The protein belongs to the bacterial ribosomal protein bL35 family.

This chain is Large ribosomal subunit protein bL35, found in Chlorobaculum parvum (strain DSM 263 / NCIMB 8327) (Chlorobium vibrioforme subsp. thiosulfatophilum).